The following is a 502-amino-acid chain: Glycerol kinase (502 aa).

Thr-13 serves as a coordination point for ADP. ATP contacts are provided by Thr-13, Thr-14, and Ser-15. Thr-13 contributes to the sn-glycerol 3-phosphate binding site. ADP is bound at residue Arg-17. Arg-83, Glu-84, Tyr-136, and Asp-246 together coordinate sn-glycerol 3-phosphate. The glycerol site is built by Arg-83, Glu-84, Tyr-136, Asp-246, and Gln-247. 2 residues coordinate ADP: Thr-268 and Gly-311. Positions 268, 311, 315, and 412 each coordinate ATP. ADP-binding residues include Gly-412 and Asn-416.

This sequence belongs to the FGGY kinase family.

The catalysed reaction is glycerol + ATP = sn-glycerol 3-phosphate + ADP + H(+). The protein operates within polyol metabolism; glycerol degradation via glycerol kinase pathway; sn-glycerol 3-phosphate from glycerol: step 1/1. With respect to regulation, inhibited by fructose 1,6-bisphosphate (FBP). Its function is as follows. Key enzyme in the regulation of glycerol uptake and metabolism. Catalyzes the phosphorylation of glycerol to yield sn-glycerol 3-phosphate. This Francisella tularensis subsp. holarctica (strain FTNF002-00 / FTA) protein is Glycerol kinase.